The primary structure comprises 418 residues: MTEETHPDDDSYIVRVKAVVMTRDDSSGGWFPQEGGGISRVGVCKVMHPEGNGRSGFLIHGERQKDKLVVLECYVRKDLVYTKANPTFHHWKVDNRKFGLTFQSPADARAFDRGVRKAIEDLIEGSTTSSSTIHNEAELGDDDVFTTATDSSSNSSQKREQPTRTISSPTSCEHRRIYTLGHLHDSYPTDHYHLDQPMPRPYRQVSFPDDDEEIVRINPREKIWMTGYEDYRHAPVRGKYPDPSEDADSSYVRFAKGEVPKHDYNYPYVDSSDFGLGEDPKGRGGSVIKTQPSRGKSRRRKEDGERSRCVYCRDMFNHEENRRGHCQDAPDSVRTCIRRVSCMWCADSMLYHCMSDPEGDYTDPCSCDTSDEKFCLRWMALIALSFLAPCMCCYLPLRACYHCGVMCRCCGGKHKAAA.

Residues 5–122 (THPDDDSYIV…RGVRKAIEDL (118 aa)) enclose the WH1 domain. Residues 127 to 171 (TTSSSTIHNEAELGDDDVFTTATDSSSNSSQKREQPTRTISSPTS) form a disordered region. Residues 146-156 (TTATDSSSNSS) are compositionally biased toward polar residues. A KBD domain is found at 201–257 (PYRQVSFPDDDEEIVRINPREKIWMTGYEDYRHAPVRGKYPDPSEDADSSYVRFAKG). At S206 the chain carries Phosphoserine. 2 positions are modified to phosphotyrosine: Y228 and Y231. Residues 275 to 302 (GLGEDPKGRGGSVIKTQPSRGKSRRRKE) are disordered. The 109-residue stretch at 308 to 416 (RCVYCRDMFN…CRCCGGKHKA (109 aa)) folds into the SPR domain.

In terms of assembly, homodimer and heterodimer. Able to interact with SPRED1 to form heterodimers. Interacts with RAS. May interact with ZDHHC13 (via ANK repeats) and ZDHHC17 (via ANK repeats). Interacts with TESK1. Interacts with NF1. Post-translationally, phosphorylated on serine and threonine residues. Phosphorylated on tyrosine. Phosphorylation of Tyr-228 and Tyr-231 are required for ubiquitination. Ubiquitinated; leading to degradation by the proteasome. As to expression, expressed in liver, skin, small intestine, salivary gland and prostate.

It is found in the cell membrane. The protein resides in the cytoplasmic vesicle. Its subcellular location is the secretory vesicle membrane. The protein localises to the cytoplasm. In terms of biological role, negatively regulates Ras signaling pathways and downstream activation of MAP kinases. Recruits and translocates NF1 to the cell membrane, thereby enabling NF1-dependent hydrolysis of active GTP-bound Ras to inactive GDP-bound Ras. Inhibits fibroblast growth factor (FGF)-induced retinal lens fiber differentiation, probably by inhibiting FGF-mediated phosphorylation of ERK1/2. Inhibits TGFB-induced epithelial-to-mesenchymal transition in lens epithelial cells. In Homo sapiens (Human), this protein is Sprouty-related, EVH1 domain-containing protein 2 (SPRED2).